We begin with the raw amino-acid sequence, 168 residues long: MAVLEILTAPDPRLRVQSKEVTDVAAVQTLIDDLLETLYETDNGVGLAAPQVGREEAIVVIDLSENRDEPLVLVNPKVVSGSNKEMGQEGCLSVPDYYADVERYTSVVVEALDRNGKELRIETSEFLAIVMQHEIDHLSGNLFIDYLSPLKQQMAMKKVKKHNKLRAR.

The Fe cation site is built by Cys-91 and His-133. Glu-134 is a catalytic residue. Residue His-137 participates in Fe cation binding.

The protein belongs to the polypeptide deformylase family. Fe(2+) is required as a cofactor.

The catalysed reaction is N-terminal N-formyl-L-methionyl-[peptide] + H2O = N-terminal L-methionyl-[peptide] + formate. Removes the formyl group from the N-terminal Met of newly synthesized proteins. Requires at least a dipeptide for an efficient rate of reaction. N-terminal L-methionine is a prerequisite for activity but the enzyme has broad specificity at other positions. The sequence is that of Peptide deformylase 1 from Vibrio vulnificus (strain YJ016).